A 154-amino-acid polypeptide reads, in one-letter code: Protein X (154 aa).

The interval 68–117 (PCALRFTSARRMETTVNAHQILPKVLHKRTLGLSAMSTTDLEAYFKACLF) is mitochondrial targeting sequence.

It belongs to the orthohepadnavirus protein X family. In terms of assembly, may form homodimer. May interact with host CEBPA, CFLAR, CREB1, DDB1, E4F1, HBXIP, HSPD1/HSP60, NFKBIA, POLR2E and SMAD4. Interacts with host SMC5-SMC6 complex and induces its degradation. Interacts with host TRPC4AP; leading to prevent ubiquitination of TRPC4AP. Interacts with host PLSCR1; this interaction promotes ubiquitination and degradation of HBx and impairs HBx-mediated cell proliferation. A fraction may be phosphorylated in insect cells and HepG2 cells, a human hepatoblastoma cell line. Phosphorylated in vitro by host protein kinase C or mitogen-activated protein kinase. N-acetylated in insect cells.

The protein localises to the host cytoplasm. Its subcellular location is the host nucleus. The protein resides in the host mitochondrion. Its function is as follows. Multifunctional protein that plays a role in silencing host antiviral defenses and promoting viral transcription. Does not seem to be essential for HBV infection. May be directly involved in development of cirrhosis and liver cancer (hepatocellular carcinoma). Most of cytosolic activities involve modulation of cytosolic calcium. The effect on apoptosis is controversial depending on the cell types in which the studies have been conducted. May induce apoptosis by localizing in mitochondria and causing loss of mitochondrial membrane potential. May also modulate apoptosis by binding host CFLAR, a key regulator of the death-inducing signaling complex (DISC). Promotes viral transcription by using the host E3 ubiquitin ligase DDB1 to target the SMC5-SMC6 complex to proteasomal degradation. This host complex would otherwise bind to viral episomal DNA, and prevents its transcription. Moderately stimulates transcription of many different viral and cellular transcription elements. Promoters and enhancers stimulated by HBx contain DNA binding sites for NF-kappa-B, AP-1, AP-2, c-EBP, ATF/CREB, or the calcium-activated factor NF-AT. The sequence is that of Protein X from Hepatitis B virus genotype E (isolate Cote d'Ivoire/ABI-129/2003) (HBV-E).